The primary structure comprises 403 residues: S-adenosylmethionine synthase (403 aa).

G141–D146 lines the ATP pocket.

It belongs to the AdoMet synthase 2 family. Mg(2+) serves as cofactor.

It catalyses the reaction L-methionine + ATP + H2O = S-adenosyl-L-methionine + phosphate + diphosphate. The protein operates within amino-acid biosynthesis; S-adenosyl-L-methionine biosynthesis; S-adenosyl-L-methionine from L-methionine: step 1/1. Catalyzes the formation of S-adenosylmethionine from methionine and ATP. The chain is S-adenosylmethionine synthase from Methanococcus aeolicus (strain ATCC BAA-1280 / DSM 17508 / OCM 812 / Nankai-3).